The following is a 492-amino-acid chain: uncharacterized protein (492 aa).

The signal sequence occupies residues 1-22; that stretch reads MIRPNMFALLMLVVLAITSVNA. Asn92, Asn97, Asn119, Asn146, Asn213, Asn267, and Asn458 each carry an N-linked (GlcNAc...) asparagine; by host glycan.

Its subcellular location is the secreted. This is an uncharacterized protein from Acanthamoeba polyphaga (Amoeba).